The primary structure comprises 185 residues: MNWHMIISGLIVVVLKIVGMTFFLLYFPQIFGEHNVSFSPTERPGTVPQIFGSSNVSFTPTESFGTVCPTGWDFHQGRCFFLSTSENSWNNSMNFCKQKGSTLAIVNTPEKLKFLQNISGAEKYFIGLLYQPAEKMWRWINNSVFNGSVISHSHNFNCVTIGLTKTFDAASCDVNYRSICEKSAQ.

The Cytoplasmic segment spans residues 1–4 (MNWH). The helical; Signal-anchor for type II membrane protein transmembrane segment at 5–27 (MIISGLIVVVLKIVGMTFFLLYF) threads the bilayer. Residues 28–185 (PQIFGEHNVS…YRSICEKSAQ (158 aa)) are Extracellular-facing. Asn35 and Asn55 each carry an N-linked (GlcNAc...) asparagine glycan. Cys68 and Cys79 are oxidised to a cystine. The C-type lectin domain occupies 75 to 181 (HQGRCFFLST…CDVNYRSICE (107 aa)). Asn90, Asn117, Asn141, and Asn146 each carry an N-linked (GlcNAc...) asparagine glycan. 2 disulfides stabilise this stretch: Cys96–Cys180 and Cys158–Cys172.

In terms of assembly, monomer. Homodimer. The majority of CLEC5A is expressed as a monomeric form on macrophages. Interacts with TYROBP/DAP12. The interaction with TYROBP is required for CLEC5 cell surface expression. Interacts with HCST/DAP10. Forms a CLEC5A/TYROBP/HCST trimolecular complex depending almost solely on TYROBP. N-glycosylated. Contains sialic acid residues. Constitutively expressed in monocytes and macrophages.

It is found in the cell membrane. Functions as a positive regulator of osteoclastogenesis. Cell surface receptor that signals via TYROBP. Regulates inflammatory responses. In Sus scrofa (Pig), this protein is C-type lectin domain family 5 member A (CLEC5A).